Consider the following 160-residue polypeptide: uncharacterized protein (160 aa).

Positions 2-140 constitute an N-acetyltransferase domain; it reads MIIIPNNEIA…KARRLKPEIP (139 aa).

This is an uncharacterized protein from Bacillus subtilis (strain 168).